The chain runs to 128 residues: DNA polymerase epsilon subunit 3 (128 aa).

Residues 98-110 (EKKESKASKKDSN) are compositionally biased toward basic and acidic residues. The tract at residues 98-128 (EKKESKASKKDSNTAENANASATATAEEAPE) is disordered. The span at 111 to 128 (TAENANASATATAEEAPE) shows a compositional bias: low complexity.

Homodimer. Component of the DNA polymerase epsilon complex consisting of four subunits: the catalytic subunit PolE1/DNApol-epsilon255 and the accessory subunits PolE2/DNApol-epsilon58, Chrac-14/DNApolE3 and PolE4. Component of the chromatin accessibility complex (CHRAC), composed of Chrac-14, Chrac-16, Acf and Iswi. Forms an heterodimer with Chrac-16. The Chrac-14/Chrac-16 heterodimer interacts with Acf (via N-terminus). Interacts directly with Iswi and this interaction is further stabilized by association with Chrac-16. Component of the Ada2a-containing (ATAC) complex composed of at least Ada2a, Atac1, Hcf, Ada3, Gcn5, Mocs2B, Charac-14, Atac3, Atac2, NC2beta and wds. Interacts with cid.

Its subcellular location is the nucleus. Accessory component of the DNA polymerase epsilon complex. Participates in DNA repair and in chromosomal DNA replication. Histone-like protein which promotes nucleosome sliding of ATP-dependent nucleosome remodeling complexes. Part of the chromatin-accessibility complex (CHRAC) which uses energy/ATP to increase the general accessibility of DNA in chromatin. As a heterodimer with Chrac-16, binds DNA and facilitates nucleosome sliding by Acf. Has a role in DNA damage response by preventing cid mislocalization to chromatin. This chain is DNA polymerase epsilon subunit 3, found in Drosophila melanogaster (Fruit fly).